Here is a 592-residue protein sequence, read N- to C-terminus: Protein kinase C zeta type (592 aa).

The PB1 domain occupies 15 to 98; it reads RVRLKAHYGG…EVLIIHVFPS (84 aa). Residues 79 to 145 are interaction with SQSTM1; the sequence is AFRLVCQGRD…KRFNRGAYCG (67 aa). The Phorbol-ester/DAG-type zinc finger occupies 130 to 180; it reads GHLFQAKRFNRGAYCGQCSERIWGLSRQGYRCINCKLLVHKRCHVLVPLTC. A Protein kinase domain is found at 252–518; the sequence is FDLIRVIGRG…FSDIKSHAFF (267 aa). ATP is bound by residues 258–266 and lysine 281; that span reads IGRGSYAKV. Aspartate 376 (proton acceptor) is an active-site residue. Threonine 410 is modified (phosphothreonine; by PDPK1 and PI3K). The 72-residue stretch at 519–590 folds into the AGC-kinase C-terminal domain; sequence RSIDWDLLEK…INPLLLSAEE (72 aa). The residue at position 560 (threonine 560) is a Phosphothreonine. Serine 591 is subject to Phosphoserine.

Belongs to the protein kinase superfamily. AGC Ser/Thr protein kinase family. PKC subfamily. As to quaternary structure, interacts directly with SQSTM1. Forms a ternary complex with SQSTM1 and KCNAB2. Forms another ternary complex with SQSTM1 and GABRR3. Forms a complex with SQSTM1 and MAP2K5. Interacts with PARD6A, PARD6B and PARD6G. Part of a complex with PARD3, PARD6A or PARD6B or PARD6G and CDC42 or RAC1. Interacts with ADAP1/CENTA1. Interacts (via the protein kinase domain) with WWC1. Forms a tripartite complex with WWC1 and DDR1, but predominantly in the absence of collagen. Interacts with PDPK1 (via N-terminal region). Interacts with WDFY2 (via WD repeats 1-3). Interacts with VAMP2. Forms a complex with WDFY2 and VAMP2. Interacts with APPL1. Interacts with WWC1, WWC2 and WWC3. In terms of processing, CDH5 is required for its phosphorylation at Thr-410. Phosphorylated by protein kinase PDPK1; phosphorylation is inhibited by the apoptotic C-terminal cleavage product of PKN2. Phosphorylation at Thr-410 by PI3K activates the kinase. In terms of tissue distribution, isoform 1: In brain, highly expressed in cerebellar granule neurons and cerebellar astrocytes (at protein level). Expressed at low levels in testes, lung and kidney. Isoform 2: Specifically expressed in brain where it localizes to cerebellar granule neurons (at protein level).

Its subcellular location is the cytoplasm. The protein localises to the endosome. It localises to the cell junction. The protein resides in the membrane. The enzyme catalyses L-seryl-[protein] + ATP = O-phospho-L-seryl-[protein] + ADP + H(+). It catalyses the reaction L-threonyl-[protein] + ATP = O-phospho-L-threonyl-[protein] + ADP + H(+). Its activity is regulated as follows. Atypical PKCs (PRKCI and PRKCZ) exhibit an elevated basal enzymatic activity (that may be due to the interaction with SMG1 or SQSTM1) and are not regulated by diacylglycerol, phosphatidylserine, phorbol esters or calcium ions. Two specific sites, Thr-410 (activation loop of the kinase domain) and Thr-560 (turn motif), need to be phosphorylated for its full activation. Phosphatidylinositol 3,4,5-trisphosphate might be a physiological activator. Isoform 2: Constitutively active. Functionally, calcium- and diacylglycerol-independent serine/threonine-protein kinase that functions in phosphatidylinositol 3-kinase (PI3K) pathway and mitogen-activated protein (MAP) kinase cascade, and is involved in NF-kappa-B activation, mitogenic signaling, cell proliferation, cell polarity, inflammatory response and maintenance of long-term potentiation (LTP). Upon lipopolysaccharide (LPS) treatment in macrophages, or following mitogenic stimuli, functions downstream of PI3K to activate MAP2K1/MEK1-MAPK1/ERK2 signaling cascade independently of RAF1 activation. Required for insulin-dependent activation of AKT3, but may function as an adapter rather than a direct activator. Upon insulin treatment may act as a downstream effector of PI3K and contribute to the activation of translocation of the glucose transporter SLC2A4/GLUT4 and subsequent glucose transport in adipocytes. In EGF-induced cells, binds and activates MAP2K5/MEK5-MAPK7/ERK5 independently of its kinase activity and can activate JUN promoter through MEF2C. Through binding with SQSTM1/p62, functions in interleukin-1 signaling and activation of NF-kappa-B with the specific adapters RIPK1 and TRAF6. Participates in TNF-dependent transactivation of NF-kappa-B by phosphorylating and activating IKBKB kinase, which in turn leads to the degradation of NF-kappa-B inhibitors. In migrating astrocytes, forms a cytoplasmic complex with PARD6A and is recruited by CDC42 to function in the establishment of cell polarity along with the microtubule motor and dynein. In association with FEZ1, stimulates neuronal differentiation in PC12 cells. In the inflammatory response, is required for the T-helper 2 (Th2) differentiation process, including interleukin production, efficient activation of JAK1 and the subsequent phosphorylation and nuclear translocation of STAT6. May be involved in development of allergic airway inflammation (asthma), a process dependent on Th2 immune response. In the NF-kappa-B-mediated inflammatory response, can relieve SETD6-dependent repression of NF-kappa-B target genes by phosphorylating the RELA subunit at 'Ser-311'. Phosphorylates VAMP2 in vitro. Phosphorylates and activates LRRK1, which phosphorylates RAB proteins involved in intracellular trafficking. In terms of biological role, involved in late synaptic long term potentiation phase in CA1 hippocampal cells and long term memory maintenance. The polypeptide is Protein kinase C zeta type (Prkcz) (Mus musculus (Mouse)).